Consider the following 109-residue polypeptide: Protein phosphatase 1 regulatory subunit 1C (109 aa).

The interval alanine 25–histidine 109 is disordered. The segment covering asparagine 45–glycine 54 has biased composition (basic and acidic residues). Residues proline 55–threonine 75 show a composition bias toward polar residues. The segment covering threonine 100–histidine 109 has biased composition (basic and acidic residues).

This sequence belongs to the protein phosphatase inhibitor 1 family.

The protein localises to the cytoplasm. Functionally, may increase cell susceptibility to TNF-induced apoptosis. This is Protein phosphatase 1 regulatory subunit 1C (PPP1R1C) from Homo sapiens (Human).